The sequence spans 224 residues: Methylamine utilization ferredoxin-type protein MauM (224 aa).

The N-terminal stretch at methionine 1–alanine 41 is a signal peptide. 4 consecutive 4Fe-4S ferredoxin-type domains span residues alanine 54–tryptophan 84, glycine 91–proline 124, valine 133–glutamine 169, and methionine 177–arginine 208. 16 residues coordinate [4Fe-4S] cluster: cysteine 64, cysteine 67, cysteine 70, cysteine 74, cysteine 102, cysteine 105, cysteine 110, cysteine 114, cysteine 142, cysteine 150, cysteine 153, cysteine 157, cysteine 186, cysteine 189, cysteine 192, and cysteine 196.

It functions in the pathway one-carbon metabolism; methylamine degradation. In terms of biological role, involved in electron transfer. This Paracoccus denitrificans (strain Pd 1222) protein is Methylamine utilization ferredoxin-type protein MauM (mauM).